Here is a 120-residue protein sequence, read N- to C-terminus: Aspartate 1-decarboxylase (120 aa).

S25 serves as the catalytic Schiff-base intermediate with substrate; via pyruvic acid. S25 is modified (pyruvic acid (Ser)). Residue T57 coordinates substrate. Y58 acts as the Proton donor in catalysis. 73 to 75 (GAA) is a binding site for substrate.

It belongs to the PanD family. In terms of assembly, heterooctamer of four alpha and four beta subunits. The cofactor is pyruvate. Post-translationally, is synthesized initially as an inactive proenzyme, which is activated by self-cleavage at a specific serine bond to produce a beta-subunit with a hydroxyl group at its C-terminus and an alpha-subunit with a pyruvoyl group at its N-terminus.

It is found in the cytoplasm. It catalyses the reaction L-aspartate + H(+) = beta-alanine + CO2. It participates in cofactor biosynthesis; (R)-pantothenate biosynthesis; beta-alanine from L-aspartate: step 1/1. Functionally, catalyzes the pyruvoyl-dependent decarboxylation of aspartate to produce beta-alanine. The polypeptide is Aspartate 1-decarboxylase (Thermosipho africanus (strain TCF52B)).